Reading from the N-terminus, the 209-residue chain is Mitochondrial import inner membrane translocase subunit Tim23 (209 aa).

A run of 3 helical transmembrane segments spans residues 73–93 (FELA…FGAV), 125–145 (ALWA…GVII), and 180–200 (GGLA…WEHI).

The protein belongs to the Tim17/Tim22/Tim23 family. As to quaternary structure, component of the TIM23 complex at least composed of timm23, timm17 and timm50. The complex interacts with the timm44 component of the PAM complex.

The protein localises to the mitochondrion inner membrane. Functionally, essential component of the TIM23 complex, a complex that mediates the translocation of transit peptide-containing proteins across the mitochondrial inner membrane. The protein is Mitochondrial import inner membrane translocase subunit Tim23 (timm23) of Xenopus tropicalis (Western clawed frog).